A 688-amino-acid polypeptide reads, in one-letter code: DNA ligase (688 aa).

NAD(+) is bound by residues 42 to 46 (DAEYD), 91 to 92 (SL), and Glu128. Residue Lys130 is the N6-AMP-lysine intermediate of the active site. NAD(+) contacts are provided by Arg151, Glu188, Lys305, and Lys329. The Zn(2+) site is built by Cys423, Cys426, Cys441, and Cys447. Positions 608-688 (APQGVLAGKT…GMRKLLEGQL (81 aa)) constitute a BRCT domain.

The protein belongs to the NAD-dependent DNA ligase family. LigA subfamily. Requires Mg(2+) as cofactor. The cofactor is Mn(2+).

The enzyme catalyses NAD(+) + (deoxyribonucleotide)n-3'-hydroxyl + 5'-phospho-(deoxyribonucleotide)m = (deoxyribonucleotide)n+m + AMP + beta-nicotinamide D-nucleotide.. In terms of biological role, DNA ligase that catalyzes the formation of phosphodiester linkages between 5'-phosphoryl and 3'-hydroxyl groups in double-stranded DNA using NAD as a coenzyme and as the energy source for the reaction. It is essential for DNA replication and repair of damaged DNA. The chain is DNA ligase from Paraburkholderia phytofirmans (strain DSM 17436 / LMG 22146 / PsJN) (Burkholderia phytofirmans).